The chain runs to 140 residues: Ribosome maturation factor RimP (140 aa).

This sequence belongs to the RimP family.

Its subcellular location is the cytoplasm. In terms of biological role, required for maturation of 30S ribosomal subunits. The polypeptide is Ribosome maturation factor RimP (Campylobacter hominis (strain ATCC BAA-381 / DSM 21671 / CCUG 45161 / LMG 19568 / NCTC 13146 / CH001A)).